The chain runs to 249 residues: MLSGLVSAIRTLTIFSVPGKDAENFSSSLYWFPVVGAFLGTLLAACAWLPLSIGWSELASAVVVVGGFIVSRGMHADGLADMADGFWGGGDRERTLSIMKDPTVGSFGALALLSLMLLKWVAILRLTEHGAFALIASGVLLGRLSQVLLAASLPYARKEGGTASGFVGGAGRTHAAVALALSLMMTLPFFYRDPFLLFLLFGAALTAAALIGFLSMKKIGGITGDVLGAVSEVTELFVWLAAGVAFTAF.

Transmembrane regions (helical) follow at residues 29–49 (LYWFPVVGAFLGTLLAACAWL), 50–70 (PLSIGWSELASAVVVVGGFIV), 104–124 (VGSFGALALLSLMLLKWVAIL), 131–151 (AFALIASGVLLGRLSQVLLAA), 165–185 (GFVGGAGRTHAAVALALSLMM), 194–214 (PFLLFLLFGAALTAAALIGFL), and 226–246 (VLGAVSEVTELFVWLAAGVAF).

This sequence belongs to the CobS family. Mg(2+) serves as cofactor.

The protein resides in the cell inner membrane. The enzyme catalyses alpha-ribazole + adenosylcob(III)inamide-GDP = adenosylcob(III)alamin + GMP + H(+). The catalysed reaction is alpha-ribazole 5'-phosphate + adenosylcob(III)inamide-GDP = adenosylcob(III)alamin 5'-phosphate + GMP + H(+). The protein operates within cofactor biosynthesis; adenosylcobalamin biosynthesis; adenosylcobalamin from cob(II)yrinate a,c-diamide: step 7/7. Its function is as follows. Joins adenosylcobinamide-GDP and alpha-ribazole to generate adenosylcobalamin (Ado-cobalamin). Also synthesizes adenosylcobalamin 5'-phosphate from adenosylcobinamide-GDP and alpha-ribazole 5'-phosphate. The polypeptide is Adenosylcobinamide-GDP ribazoletransferase (Chlorobium phaeovibrioides (strain DSM 265 / 1930) (Prosthecochloris vibrioformis (strain DSM 265))).